The primary structure comprises 302 residues: Phosphoribosylaminoimidazole-succinocarboxamide synthase (302 aa).

This sequence belongs to the SAICAR synthetase family.

It catalyses the reaction 5-amino-1-(5-phospho-D-ribosyl)imidazole-4-carboxylate + L-aspartate + ATP = (2S)-2-[5-amino-1-(5-phospho-beta-D-ribosyl)imidazole-4-carboxamido]succinate + ADP + phosphate + 2 H(+). It functions in the pathway purine metabolism; IMP biosynthesis via de novo pathway; 5-amino-1-(5-phospho-D-ribosyl)imidazole-4-carboxamide from 5-amino-1-(5-phospho-D-ribosyl)imidazole-4-carboxylate: step 1/2. The sequence is that of Phosphoribosylaminoimidazole-succinocarboxamide synthase from Leptothrix cholodnii (strain ATCC 51168 / LMG 8142 / SP-6) (Leptothrix discophora (strain SP-6)).